The following is a 784-amino-acid chain: MTSVHSLGFPRIGHKRELKKALESFWSREIDEQELQSRAAQLRDRHWRIQQTCGMDLVPVGDFSLYDHMLDMSCTLGAIPPRYGFAGGQVGLDTFFAMARGSATQPAMEMTKWFDTNYHFIVPEFHEGMDFRLSSERLFDQVKEVQALGLKAKPVLVGPITYLWLGKEKDLNAEAHHDAQHHHDDSACHGHGAPIGAACFDRLTLLPKVLPVYAEILARLAEMGVEWVQIDEPALALDLPQEWVEALESAYQTLRRDKTPKVLLATYFDSVADHAKALKALPVAGVHLDLRRAPQQLNSFLSDYPADKVLSLGVVDGRNVWRADLDAALELLQPAHKQLGDRLWVAPSCSLLHTPVDLEQETELDAELKSWLSFSVQKLDEVAIIGRALKEGVESVAQELAAARAAVASRKSSPRIHNPAVAQRLEGLGQDDGRRKSPFPIREAAQRARFKLPAFPTTSIGSFPQTPEIRKARLQNRKGELSNADYQKAMEAEIALVVKEQERLGIDVPVHGEPERNDMVEYFGEQLAGFAFTRHGWVQSYGSRYVKPPLIFGDVSRPTPMTVAWSKYAQSLTQRPMKGMLTGPVTILQWSFVRDDQPRERTALQIALAIRDEVRDLIDAGIGIIQIDEPAYREGLPLKRKDWGHYLEWASRAFRISAQIAPDDVQIHTHMCYSEFNDILPAIAAMDADVITIETSRSQMELLDAFATFNYPNEIGPGVYDIHSPRVPSVEEMVGLMEKAVKVVPAERLWINPDCGLKTRKWAEVTPALENMVEAARQVRARHG.

Residues 16 to 19 and Lys112 contribute to the 5-methyltetrahydropteroyltri-L-glutamate site; that span reads RELK. L-homocysteine-binding positions include 460–462 and Glu513; that span reads IGS. Residues 460–462 and Glu513 contribute to the L-methionine site; that span reads IGS. 5-methyltetrahydropteroyltri-L-glutamate is bound at residue Trp590. An L-homocysteine-binding site is contributed by Asp628. Residue Asp628 participates in L-methionine binding. Position 634 (Glu634) interacts with 5-methyltetrahydropteroyltri-L-glutamate. Residues His670, Cys672, and Glu694 each contribute to the Zn(2+) site. The active-site Proton donor is His723. Residue Cys755 coordinates Zn(2+).

Belongs to the vitamin-B12 independent methionine synthase family. Zn(2+) serves as cofactor.

It carries out the reaction 5-methyltetrahydropteroyltri-L-glutamate + L-homocysteine = tetrahydropteroyltri-L-glutamate + L-methionine. The protein operates within amino-acid biosynthesis; L-methionine biosynthesis via de novo pathway; L-methionine from L-homocysteine (MetE route): step 1/1. Functionally, catalyzes the transfer of a methyl group from 5-methyltetrahydrofolate to homocysteine resulting in methionine formation. The chain is 5-methyltetrahydropteroyltriglutamate--homocysteine methyltransferase from Acidithiobacillus ferrooxidans (strain ATCC 23270 / DSM 14882 / CIP 104768 / NCIMB 8455) (Ferrobacillus ferrooxidans (strain ATCC 23270)).